Reading from the N-terminus, the 291-residue chain is 4-diphosphocytidyl-2-C-methyl-D-erythritol kinase (291 aa).

Lys12 is an active-site residue. ATP is bound at residue Pro95–Ser105. The active site involves Asp137.

This sequence belongs to the GHMP kinase family. IspE subfamily.

The catalysed reaction is 4-CDP-2-C-methyl-D-erythritol + ATP = 4-CDP-2-C-methyl-D-erythritol 2-phosphate + ADP + H(+). The protein operates within isoprenoid biosynthesis; isopentenyl diphosphate biosynthesis via DXP pathway; isopentenyl diphosphate from 1-deoxy-D-xylulose 5-phosphate: step 3/6. Functionally, catalyzes the phosphorylation of the position 2 hydroxy group of 4-diphosphocytidyl-2C-methyl-D-erythritol. The sequence is that of 4-diphosphocytidyl-2-C-methyl-D-erythritol kinase from Alkalilimnicola ehrlichii (strain ATCC BAA-1101 / DSM 17681 / MLHE-1).